We begin with the raw amino-acid sequence, 137 residues long: Large ribosomal subunit protein bL12 (137 aa).

The protein belongs to the bacterial ribosomal protein bL12 family. As to quaternary structure, homodimer. Part of the ribosomal stalk of the 50S ribosomal subunit. Forms a multimeric L10(L12)X complex, where L10 forms an elongated spine to which 2 to 4 L12 dimers bind in a sequential fashion. Binds GTP-bound translation factors.

Its function is as follows. Forms part of the ribosomal stalk which helps the ribosome interact with GTP-bound translation factors. Is thus essential for accurate translation. This chain is Large ribosomal subunit protein bL12, found in Synechococcus sp. (strain JA-3-3Ab) (Cyanobacteria bacterium Yellowstone A-Prime).